The primary structure comprises 600 residues: Long-chain-fatty-acid--CoA ligase FadD15 (600 aa).

Belongs to the ATP-dependent AMP-binding enzyme family.

It carries out the reaction a long-chain fatty acid + ATP + CoA = a long-chain fatty acyl-CoA + AMP + diphosphate. It catalyses the reaction dodecanoate + ATP + CoA = dodecanoyl-CoA + AMP + diphosphate. The enzyme catalyses hexadecanoate + ATP + CoA = hexadecanoyl-CoA + AMP + diphosphate. It participates in lipid metabolism; fatty acid biosynthesis. Its function is as follows. Catalyzes the activation of long-chain fatty acids as acyl-coenzyme A (acyl-CoA), which are then transferred to the multifunctional polyketide synthase (PKS) type III for further chain extension. The protein is Long-chain-fatty-acid--CoA ligase FadD15 (fadD15) of Mycobacterium tuberculosis (strain ATCC 25618 / H37Rv).